We begin with the raw amino-acid sequence, 165 residues long: Chorismate pyruvate-lyase (165 aa).

Substrate-binding residues include Met-35, Arg-77, Leu-115, and Glu-156.

Belongs to the UbiC family. Monomer.

The protein localises to the cytoplasm. It catalyses the reaction chorismate = 4-hydroxybenzoate + pyruvate. The protein operates within cofactor biosynthesis; ubiquinone biosynthesis. Functionally, removes the pyruvyl group from chorismate, with concomitant aromatization of the ring, to provide 4-hydroxybenzoate (4HB) for the ubiquinone pathway. The protein is Chorismate pyruvate-lyase of Enterobacter sp. (strain 638).